The sequence spans 770 residues: Nucleus-vacuole junction protein 2 (770 aa).

The Cytoplasmic segment spans residues 1-5 (MASLK). Residues 6–26 (VFLAVYLLGGITFLPLVLFTL) traverse the membrane as a helical; Signal-anchor for type II membrane protein segment. At 27 to 770 (YKIHLLYSNL…EFEEQREPKL (744 aa)) the chain is on the lumenal side. The PH domain maps to 114–266 (TALQEQILQR…WYYQLINASK (153 aa)). N-linked (GlcNAc...) asparagine glycans are attached at residues Asn228, Asn263, Asn279, Asn300, Asn391, Asn528, and Asn529. In terms of domain architecture, SMP-LTD spans 304-504 (NQLTTKWLNA…YPTPNEVYRG (201 aa)). 3 disordered regions span residues 541-566 (EGGM…LKDL), 578-600 (TQTT…TKSR), and 615-770 (KDNV…EPKL). Over residues 554-566 (LRPERKKENLKDL) the composition is skewed to basic and acidic residues. Positions 587-596 (NDDVSSSENS) are enriched in polar residues. Residues Asn595 and Asn620 are each glycosylated (N-linked (GlcNAc...) asparagine). A phosphoserine mark is found at Ser640 and Ser669. Basic and acidic residues predominate over residues 679 to 688 (LEGRKEKDTE). A glycan (N-linked (GlcNAc...) asparagine) is linked at Asn700. 2 stretches are compositionally biased toward polar residues: residues 713-725 (FSVS…NSLK) and 736-751 (LESS…QNRF). The residue at position 717 (Ser717) is a Phosphoserine. N-linked (GlcNAc...) asparagine glycosylation occurs at Asn718. Residues Ser720 and Ser723 each carry the phosphoserine modification. A compositionally biased stretch (basic and acidic residues) spans 756–770 (FKQDLEFEEQREPKL).

The protein localises to the endoplasmic reticulum membrane. Its subcellular location is the nucleus membrane. During endoplasmic reticulum (ER) stress or when cellular ceramide levels increase, induces contacts between the ER and medial-Golgi complex to facilitate non-vesicular transport of ceramides from the ER to the Golgi complex where they are converted to complex sphingolipids, preventing toxic ceramide accumulation. This is Nucleus-vacuole junction protein 2 from Saccharomyces cerevisiae (strain ATCC 204508 / S288c) (Baker's yeast).